The chain runs to 393 residues: Elongation factor Tu (393 aa).

Residues 10–203 form the tr-type G domain; that stretch reads KPHVNIGTIG…AVDNYIPTPV (194 aa). Residues 19–26 form a G1 region; that stretch reads GHVDHGKT. Residue 19–26 participates in GTP binding; it reads GHVDHGKT. Threonine 26 lines the Mg(2+) pocket. Residues 60–64 are G2; it reads GITIS. The tract at residues 81-84 is G3; it reads DCPG. GTP is bound by residues 81-85 and 136-139; these read DCPGH and NKVD. The tract at residues 136–139 is G4; the sequence is NKVD. The G5 stretch occupies residues 173-175; that stretch reads SAL.

The protein belongs to the TRAFAC class translation factor GTPase superfamily. Classic translation factor GTPase family. EF-Tu/EF-1A subfamily. In terms of assembly, monomer.

The protein localises to the cytoplasm. The catalysed reaction is GTP + H2O = GDP + phosphate + H(+). Functionally, GTP hydrolase that promotes the GTP-dependent binding of aminoacyl-tRNA to the A-site of ribosomes during protein biosynthesis. The protein is Elongation factor Tu of Chloroherpeton thalassium (strain ATCC 35110 / GB-78).